Here is a 129-residue protein sequence, read N- to C-terminus: MSNVPHELLYTKEHEWVRIDGNSAVVGITEHAQRELGDVVFVELPDVGKSFEVGEPFGTVESVKAVSEIYAPLSGEITEINNEVVDSPELVNEDPYGEGWLAKFSFTTAPSGLLSAAEYERYINDEANK.

Positions Ser-23–Ser-105 constitute a Lipoyl-binding domain. Lys-64 bears the N6-lipoyllysine mark.

The protein belongs to the GcvH family. The glycine cleavage system is composed of four proteins: P, T, L and H. The cofactor is (R)-lipoate.

Functionally, the glycine cleavage system catalyzes the degradation of glycine. The H protein shuttles the methylamine group of glycine from the P protein to the T protein. This Herpetosiphon aurantiacus (strain ATCC 23779 / DSM 785 / 114-95) protein is Glycine cleavage system H protein.